The following is a 46-amino-acid chain: Toxin PhcrTx2 (46 aa).

3 cysteine pairs are disulfide-bonded: C4/C40, C6/C32, and C22/C41.

It belongs to the sea anemone type 3 (BDS) potassium channel toxin family.

It is found in the secreted. Its subcellular location is the nematocyst. Its function is as follows. Neurotoxin that induces paralysis (but not death) to U.thayeri crabs. Partially and reversibly inhibits glutamate-evoked peak currents (IC(50)=4.7 uM) but not voltage-gated potassium channel currents in cultured isolated neurons from the land snail H.aspersa. Weakly inhibits voltage-gated potassium peak currents (IC(50)=6.4 uM) and steady-state currents (IC(50)=8.2 uM) in rat dorsal root ganglion (DRG) neurons. Weakly inhibits voltage-gated sodium currents in rat DRG neurons (IC(50)=0.9 uM). This Phymanthus crucifer (Red beaded anemone) protein is Toxin PhcrTx2.